Consider the following 309-residue polypeptide: Cytochrome c biogenesis protein CcsA (309 aa).

Helical transmembrane passes span 18-38 (LGLL…GAFF), 43-63 (FFIV…QLLF), 67-87 (ISGH…TWGI), 102-122 (IIPS…CFVL), 148-168 (VMLS…VLFI), 216-236 (SILI…VWAN), 250-267 (TWAF…HMRI), and 279-299 (LATT…FLGI).

This sequence belongs to the CcmF/CycK/Ccl1/NrfE/CcsA family. In terms of assembly, may interact with ccs1.

Its subcellular location is the cellular thylakoid membrane. In terms of biological role, required during biogenesis of c-type cytochromes (cytochrome c6 and cytochrome f) at the step of heme attachment. This chain is Cytochrome c biogenesis protein CcsA, found in Prochlorococcus marinus (strain MIT 9215).